The following is a 432-amino-acid chain: Enolase (432 aa).

Position 167 (Gln167) interacts with (2R)-2-phosphoglycerate. The Proton donor role is filled by Glu209. Residues Asp246, Glu290, and Asp317 each coordinate Mg(2+). The (2R)-2-phosphoglycerate site is built by Lys342, Arg371, Ser372, and Lys393. Residue Lys342 is the Proton acceptor of the active site.

This sequence belongs to the enolase family. Component of the RNA degradosome, a multiprotein complex involved in RNA processing and mRNA degradation. Mg(2+) serves as cofactor.

The protein resides in the cytoplasm. The protein localises to the secreted. Its subcellular location is the cell surface. The catalysed reaction is (2R)-2-phosphoglycerate = phosphoenolpyruvate + H2O. It participates in carbohydrate degradation; glycolysis; pyruvate from D-glyceraldehyde 3-phosphate: step 4/5. In terms of biological role, catalyzes the reversible conversion of 2-phosphoglycerate (2-PG) into phosphoenolpyruvate (PEP). It is essential for the degradation of carbohydrates via glycolysis. The polypeptide is Enolase (Salmonella agona (strain SL483)).